We begin with the raw amino-acid sequence, 833 residues long: Neurogenic locus protein delta (833 aa).

The N-terminal stretch at 1 to 18 (MHWIKCLLTAFICFTVIV) is a signal peptide. The Extracellular portion of the chain corresponds to 19–594 (QVHSSGSFEL…ARADGLTNAQ (576 aa)). 2 cysteine pairs are disulfide-bonded: Cys46/Cys61 and Cys68/Cys82. 3 N-linked (GlcNAc...) asparagine glycosylation sites follow: Asn98, Asn137, and Asn167. A DSL domain is found at 182-226 (VTCDLNYYGSGCAKFCRPRDDSFGHSTCSETGEIICLTGWQGDYC). 30 disulfide bridges follow: Cys184-Cys193, Cys197-Cys209, Cys217-Cys226, Cys231-Cys240, Cys235-Cys246, Cys248-Cys257, Cys260-Cys271, Cys266-Cys277, Cys279-Cys288, Cys295-Cys307, Cys301-Cys317, Cys319-Cys328, Cys335-Cys348, Cys342-Cys360, Cys362-Cys371, Cys378-Cys388, Cys383-Cys404, Cys406-Cys415, Cys422-Cys433, Cys427-Cys439, Cys441-Cys450, Cys457-Cys468, Cys462-Cys477, Cys479-Cys488, Cys495-Cys506, Cys500-Cys515, Cys517-Cys526, Cys533-Cys544, Cys538-Cys553, and Cys555-Cys564. EGF-like domains follow at residues 227-258 (HIPK…ALCN), 256-289 (LCNE…LYCN), 291-329 (DLNY…DDCE), 331-372 (EIYS…KMCE), 374-416 (KVLT…PNCD), and 418-451 (QLDN…TRCE). The region spanning 453 to 489 (NIDDCLGHQCENGGTCIDMVNQYRCQCVPGFHGTHCS) is the EGF-like 7; calcium-binding domain. One can recognise an EGF-like 8 domain in the interval 491 to 527 (KVDLCLIRPCANGGTCLNLNNDYQCTCRAGFTGKDCS). The EGF-like 9; calcium-binding domain maps to 529 to 565 (DIDECSSGPCHNGGTCMNRVNSFECVCANGFRGKQCD). The chain crosses the membrane as a helical span at residues 595–617 (VVLIAVFSVAMPLVAVIAACVVF). The Cytoplasmic portion of the chain corresponds to 618-833 (CMKRKRKRAQ…RSVVCGTPHM (216 aa)). Thr666 carries the post-translational modification Phosphothreonine. Residues 743-773 (QLNTDPTLMHRGSPAGSSAKGASGGGPGAAE) form a disordered region. The span at 754–763 (GSPAGSSAKG) shows a compositional bias: low complexity.

As to quaternary structure, interacts with Notch (N) via the EGF repeats and the N EGF repeats. Post-translationally, ubiquitinated by Mib, leading to its endocytosis and subsequent degradation. In terms of tissue distribution, detected in all areas with neurogenic abilities, for example the neurogenic ectoderm and the primordia of the sense organs. Later expression is restricted to those cells that have adopted a neural fate.

Its subcellular location is the membrane. Its function is as follows. Acts as a ligand for Notch (N) receptor. Essential for proper differentiation of ectoderm. Delta is required for the correct separation of neural and epidermal cell lineages. Fringe (fng) acts in the Golgi to determine the type of O-linked fucose on the EGF modules in N, altering the ability of N to bind with Delta. O-fut1 also has a role in modulating the interaction. In Drosophila melanogaster (Fruit fly), this protein is Neurogenic locus protein delta.